The sequence spans 106 residues: L-rhamnose mutarotase (106 aa).

Residue Tyr-20 participates in substrate binding. Catalysis depends on His-24, which acts as the Proton donor. Substrate is bound by residues Tyr-43 and 78–79 (WW).

It belongs to the rhamnose mutarotase family. Homodimer.

The protein resides in the cytoplasm. The enzyme catalyses alpha-L-rhamnose = beta-L-rhamnose. It participates in carbohydrate metabolism; L-rhamnose metabolism. In terms of biological role, involved in the anomeric conversion of L-rhamnose. The chain is L-rhamnose mutarotase from Brucella anthropi (strain ATCC 49188 / DSM 6882 / CCUG 24695 / JCM 21032 / LMG 3331 / NBRC 15819 / NCTC 12168 / Alc 37) (Ochrobactrum anthropi).